A 136-amino-acid polypeptide reads, in one-letter code: 1,4-dihydroxy-2-naphthoyl-CoA hydrolase (136 aa).

Residue Asp-16 is part of the active site.

Belongs to the 4-hydroxybenzoyl-CoA thioesterase family. DHNA-CoA hydrolase subfamily.

The catalysed reaction is 1,4-dihydroxy-2-naphthoyl-CoA + H2O = 1,4-dihydroxy-2-naphthoate + CoA + H(+). It participates in cofactor biosynthesis; phylloquinone biosynthesis. Its pathway is quinol/quinone metabolism; 1,4-dihydroxy-2-naphthoate biosynthesis; 1,4-dihydroxy-2-naphthoate from chorismate: step 7/7. Functionally, catalyzes the hydrolysis of 1,4-dihydroxy-2-naphthoyl-CoA (DHNA-CoA) to 1,4-dihydroxy-2-naphthoate (DHNA), a reaction involved in phylloquinone (vitamin K1) biosynthesis. This Synechococcus sp. (strain ATCC 27144 / PCC 6301 / SAUG 1402/1) (Anacystis nidulans) protein is 1,4-dihydroxy-2-naphthoyl-CoA hydrolase.